The following is a 122-amino-acid chain: Heat-labile enterotoxin IIB, B chain (122 aa).

Positions M1 to A23 are cleaved as a signal peptide. An intrachain disulfide couples C33 to C104.

In terms of assembly, heterohexamer of one A chain and of five B chains.

Its function is as follows. The biological activity of the toxin is produced by the A chain, which activates intracellular adenyl cyclase. This chain is Heat-labile enterotoxin IIB, B chain, found in Escherichia coli.